The sequence spans 586 residues: Mitogen-activated protein kinase 15 (586 aa).

One can recognise a Protein kinase domain in the interval 14–305 (YDIKKRLGKG…AEEALEHPYV (292 aa)). Residues 20–28 (LGKGAYGIV) and Lys-43 each bind ATP. The Proton acceptor role is filled by Asp-138. Disordered regions lie at residues 354-506 (QKRE…DAPP) and 520-539 (NQRTAPIQGRDPRSAPRFGR). Positions 382–393 (PAPPAGTNPAPQ) are enriched in pro residues. Residues 400-414 (PQRAAIAAPNQPPAQ) show a composition bias toward low complexity. Residues 415 to 439 (KDSTQQSPKIKAPSSNPITHSTTHG) are compositionally biased toward polar residues. The span at 452–463 (AGQQGAAGTTAQ) shows a compositional bias: low complexity. Over residues 464 to 473 (EVRKEVESRS) the composition is skewed to basic and acidic residues. Polar residues predominate over residues 484–498 (FSHSQQARAAATNSA).

In terms of assembly, interacts with dvl2.

It is found in the cytoplasm. Its subcellular location is the cytoskeleton. The protein localises to the cilium basal body. It localises to the cell projection. The protein resides in the cilium. It is found in the cell junction. It carries out the reaction L-seryl-[protein] + ATP = O-phospho-L-seryl-[protein] + ADP + H(+). It catalyses the reaction L-threonyl-[protein] + ATP = O-phospho-L-threonyl-[protein] + ADP + H(+). Its function is as follows. Atypical MAPK protein that regulates ciliogenesis by phosphorylating rcsd1 through its binding with dvl2. The chain is Mitogen-activated protein kinase 15 from Xenopus laevis (African clawed frog).